Consider the following 316-residue polypeptide: Ribosomal protein L11 methyltransferase (316 aa).

S-adenosyl-L-methionine is bound by residues threonine 162, glycine 183, aspartate 205, and asparagine 248.

The protein belongs to the methyltransferase superfamily. PrmA family.

Its subcellular location is the cytoplasm. The enzyme catalyses L-lysyl-[protein] + 3 S-adenosyl-L-methionine = N(6),N(6),N(6)-trimethyl-L-lysyl-[protein] + 3 S-adenosyl-L-homocysteine + 3 H(+). Functionally, methylates ribosomal protein L11. The sequence is that of Ribosomal protein L11 methyltransferase from Levilactobacillus brevis (strain ATCC 367 / BCRC 12310 / CIP 105137 / JCM 1170 / LMG 11437 / NCIMB 947 / NCTC 947) (Lactobacillus brevis).